An 86-amino-acid polypeptide reads, in one-letter code: Small muscular protein (86 aa).

Positions 20–64 are disordered; it reads MGAFRPGAGQPPRRKECTPEIEEGAPPTSDEEKKPIPGAKKLPGP.

The protein belongs to the SMPX family.

Plays a role in the regulatory network through which muscle cells coordinate their structural and functional states during growth, adaptation, and repair. The polypeptide is Small muscular protein (SMPX) (Bos taurus (Bovine)).